The chain runs to 416 residues: Histidinol dehydrogenase (416 aa).

Residues Tyr-117, Gln-178, and Asn-201 each coordinate NAD(+). The substrate site is built by Thr-224, Gln-246, and His-249. 2 residues coordinate Zn(2+): Gln-246 and His-249. Residues Glu-314 and His-315 each act as proton acceptor in the active site. Substrate is bound by residues His-315, Asp-348, Glu-402, and His-407. A Zn(2+)-binding site is contributed by Asp-348. His-407 serves as a coordination point for Zn(2+).

The protein belongs to the histidinol dehydrogenase family. It depends on Zn(2+) as a cofactor.

The catalysed reaction is L-histidinol + 2 NAD(+) + H2O = L-histidine + 2 NADH + 3 H(+). It functions in the pathway amino-acid biosynthesis; L-histidine biosynthesis; L-histidine from 5-phospho-alpha-D-ribose 1-diphosphate: step 9/9. Catalyzes the sequential NAD-dependent oxidations of L-histidinol to L-histidinaldehyde and then to L-histidine. This Staphylococcus aureus (strain Mu50 / ATCC 700699) protein is Histidinol dehydrogenase.